The primary structure comprises 120 residues: Large ribosomal subunit protein bL20 (120 aa).

This sequence belongs to the bacterial ribosomal protein bL20 family.

Its function is as follows. Binds directly to 23S ribosomal RNA and is necessary for the in vitro assembly process of the 50S ribosomal subunit. It is not involved in the protein synthesizing functions of that subunit. In Ureaplasma parvum serovar 3 (strain ATCC 27815 / 27 / NCTC 11736), this protein is Large ribosomal subunit protein bL20.